We begin with the raw amino-acid sequence, 361 residues long: Ribosomal RNA large subunit methyltransferase M (361 aa).

S-adenosyl-L-methionine-binding positions include Ser187, 220 to 223 (CPGG), Asp239, Asp259, and Asp276. Lys305 functions as the Proton acceptor in the catalytic mechanism.

This sequence belongs to the class I-like SAM-binding methyltransferase superfamily. RNA methyltransferase RlmE family. RlmM subfamily. Monomer.

It localises to the cytoplasm. The enzyme catalyses cytidine(2498) in 23S rRNA + S-adenosyl-L-methionine = 2'-O-methylcytidine(2498) in 23S rRNA + S-adenosyl-L-homocysteine + H(+). Catalyzes the 2'-O-methylation at nucleotide C2498 in 23S rRNA. The chain is Ribosomal RNA large subunit methyltransferase M from Shewanella sp. (strain MR-7).